The chain runs to 421 residues: WD repeat and SOCS box-containing protein 1 (421 aa).

5 WD repeats span residues 124 to 165, 168 to 208, 212 to 251, 254 to 293, and 309 to 346; these read SRCV…LLLN, DHIE…NMVK, AHQN…MIRK, GHHH…LLME, and ANDR…DCPV. Residues 372-421 form the SOCS box domain; that stretch reads DGSVYFWATPRQVPSLQHICRMSIRRVMSTQEVQKLPVPSKILAFLSYRG.

As to quaternary structure, interacts with DIO2. Component of the probable ECS(WSB1) E3 ubiquitin-protein ligase complex which contains CUL5, RNF7/RBX2, Elongin BC complex and WSB1. Component of a probable ECS-like E3 ubiquitin-protein ligase complex which contains CUL5, RBX1, Elongin BC complex and WSB1. Interacts with CUL5, RNF7, ELOB and ELOC. Binds to HIPK2 through WD40 repeats.

It participates in protein modification; protein ubiquitination. Its function is as follows. Probable substrate-recognition component of a SCF-like ECS (Elongin-Cullin-SOCS-box protein) E3 ubiquitin ligase complex which mediates the ubiquitination and subsequent proteasomal degradation of target proteins. Recognizes type II iodothyronine deiodinase/DIO2. Confers constitutive instability to HIPK2 through proteasomal degradation. This is WD repeat and SOCS box-containing protein 1 (Wsb1) from Mus musculus (Mouse).